A 209-amino-acid polypeptide reads, in one-letter code: Ribosomal RNA large subunit methyltransferase E (209 aa).

The S-adenosyl-L-methionine site is built by Gly-63, Trp-65, Asp-83, Asp-99, and Asp-124. Lys-164 (proton acceptor) is an active-site residue.

This sequence belongs to the class I-like SAM-binding methyltransferase superfamily. RNA methyltransferase RlmE family.

The protein localises to the cytoplasm. The catalysed reaction is uridine(2552) in 23S rRNA + S-adenosyl-L-methionine = 2'-O-methyluridine(2552) in 23S rRNA + S-adenosyl-L-homocysteine + H(+). Specifically methylates the uridine in position 2552 of 23S rRNA at the 2'-O position of the ribose in the fully assembled 50S ribosomal subunit. The sequence is that of Ribosomal RNA large subunit methyltransferase E from Shewanella putrefaciens (strain CN-32 / ATCC BAA-453).